The primary structure comprises 163 residues: Acetolactate synthase small subunit (163 aa).

An ACT domain is found at 4-79 (ILSVLLENES…VFKVVNLSEQ (76 aa)).

The protein belongs to the acetolactate synthase small subunit family. Dimer of large and small chains.

It catalyses the reaction 2 pyruvate + H(+) = (2S)-2-acetolactate + CO2. The protein operates within amino-acid biosynthesis; L-isoleucine biosynthesis; L-isoleucine from 2-oxobutanoate: step 1/4. It functions in the pathway amino-acid biosynthesis; L-valine biosynthesis; L-valine from pyruvate: step 1/4. The protein is Acetolactate synthase small subunit (ilvH) of Haemophilus influenzae (strain ATCC 51907 / DSM 11121 / KW20 / Rd).